Reading from the N-terminus, the 87-residue chain is Mitochondrial import inner membrane translocase subunit TIM9 (87 aa).

Residues Cys35–Cys59 carry the Twin CX3C motif motif. Cystine bridges form between Cys35–Cys59 and Cys39–Cys55.

This sequence belongs to the small Tim family. Heterohexamer; composed of 3 copies of TIM9 and 3 copies of TIM10, named soluble 70 kDa complex. Associates with the TIM22 complex, whose core is composed of TIM22 and TIM54. Interacts with the transmembrane regions of multi-pass transmembrane proteins in transit.

It is found in the mitochondrion inner membrane. In terms of biological role, mitochondrial intermembrane chaperone that participates in the import and insertion of multi-pass transmembrane proteins into the mitochondrial inner membrane. Also required for the transfer of beta-barrel precursors from the TOM complex to the sorting and assembly machinery (SAM complex) of the outer membrane. Acts as a chaperone-like protein that protects the hydrophobic precursors from aggregation and guide them through the mitochondrial intermembrane space. The sequence is that of Mitochondrial import inner membrane translocase subunit TIM9 (TIM9) from Candida albicans (strain SC5314 / ATCC MYA-2876) (Yeast).